Here is a 342-residue protein sequence, read N- to C-terminus: S-adenosylmethionine:tRNA ribosyltransferase-isomerase (342 aa).

The protein belongs to the QueA family. Monomer.

It is found in the cytoplasm. It catalyses the reaction 7-aminomethyl-7-carbaguanosine(34) in tRNA + S-adenosyl-L-methionine = epoxyqueuosine(34) in tRNA + adenine + L-methionine + 2 H(+). Its pathway is tRNA modification; tRNA-queuosine biosynthesis. In terms of biological role, transfers and isomerizes the ribose moiety from AdoMet to the 7-aminomethyl group of 7-deazaguanine (preQ1-tRNA) to give epoxyqueuosine (oQ-tRNA). This Streptococcus pneumoniae (strain ATCC BAA-255 / R6) protein is S-adenosylmethionine:tRNA ribosyltransferase-isomerase.